The following is a 1061-amino-acid chain: Translation initiation factor IF-2 (1061 aa).

Disordered regions lie at residues 51–199 (FARG…VAVK) and 250–460 (AFQA…IPTE). Over residues 67–77 (NEPKPKIDWSR) the composition is skewed to basic and acidic residues. Low complexity-rich tracts occupy residues 97 to 113 (VAAARPAAVPVAPKAPV), 120 to 130 (RPSAPRPAVTA), 167 to 177 (VPQPRQPSAVV), 184 to 199 (TPAIAARPPAAPVAVK), and 250 to 278 (AFQAPAAPAAPAASQSAPQEAKTPAAEAP). Positions 279–291 (PVAPEKPAVPAPP) are enriched in pro residues. The span at 340–360 (SPGGPGGPGGGYGQRPSGPGG) shows a compositional bias: gly residues. Low complexity predominate over residues 381-391 (GFNNGPRPGFG). Positions 392–405 (QRPGGFGQRPGMGA) are enriched in gly residues. One can recognise a tr-type G domain in the interval 552-728 (SRPPVVTVMG…CLVADLGNLK (177 aa)). A G1 region spans residues 561-568 (GHVDHGKT). A GTP-binding site is contributed by 561–568 (GHVDHGKT). Residues 586–590 (GITQH) form a G2 region. The interval 614–617 (DTPG) is G3. GTP is bound by residues 614 to 618 (DTPGH) and 668 to 671 (NKID). The G4 stretch occupies residues 668–671 (NKID). The tract at residues 704–706 (SAK) is G5.

Belongs to the TRAFAC class translation factor GTPase superfamily. Classic translation factor GTPase family. IF-2 subfamily.

It is found in the cytoplasm. In terms of biological role, one of the essential components for the initiation of protein synthesis. Protects formylmethionyl-tRNA from spontaneous hydrolysis and promotes its binding to the 30S ribosomal subunits. Also involved in the hydrolysis of GTP during the formation of the 70S ribosomal complex. The polypeptide is Translation initiation factor IF-2 (Acidobacterium capsulatum (strain ATCC 51196 / DSM 11244 / BCRC 80197 / JCM 7670 / NBRC 15755 / NCIMB 13165 / 161)).